Consider the following 339-residue polypeptide: RNA 3'-terminal phosphate cyclase (339 aa).

ATP contacts are provided by residues Gln-101 and 283–286 (HMSD). His-307 serves as the catalytic Tele-AMP-histidine intermediate.

Belongs to the RNA 3'-terminal cyclase family. Type 1 subfamily.

Its subcellular location is the cytoplasm. The catalysed reaction is a 3'-end 3'-phospho-ribonucleotide-RNA + ATP = a 3'-end 2',3'-cyclophospho-ribonucleotide-RNA + AMP + diphosphate. Functionally, catalyzes the conversion of 3'-phosphate to a 2',3'-cyclic phosphodiester at the end of RNA. The mechanism of action of the enzyme occurs in 3 steps: (A) adenylation of the enzyme by ATP; (B) transfer of adenylate to an RNA-N3'P to produce RNA-N3'PP5'A; (C) and attack of the adjacent 2'-hydroxyl on the 3'-phosphorus in the diester linkage to produce the cyclic end product. The biological role of this enzyme is unknown but it is likely to function in some aspects of cellular RNA processing. This Sulfurisphaera tokodaii (strain DSM 16993 / JCM 10545 / NBRC 100140 / 7) (Sulfolobus tokodaii) protein is RNA 3'-terminal phosphate cyclase.